Consider the following 293-residue polypeptide: Pyridoxal 5'-phosphate synthase subunit PdxS (293 aa).

Residue Asp23 participates in D-ribose 5-phosphate binding. The active-site Schiff-base intermediate with D-ribose 5-phosphate is the Lys80. Gly152 is a binding site for D-ribose 5-phosphate. Arg164 lines the D-glyceraldehyde 3-phosphate pocket. D-ribose 5-phosphate-binding positions include Gly213 and 234-235 (GS).

Belongs to the PdxS/SNZ family. In the presence of PdxT, forms a dodecamer of heterodimers.

It carries out the reaction aldehydo-D-ribose 5-phosphate + D-glyceraldehyde 3-phosphate + L-glutamine = pyridoxal 5'-phosphate + L-glutamate + phosphate + 3 H2O + H(+). It participates in cofactor biosynthesis; pyridoxal 5'-phosphate biosynthesis. In terms of biological role, catalyzes the formation of pyridoxal 5'-phosphate from ribose 5-phosphate (RBP), glyceraldehyde 3-phosphate (G3P) and ammonia. The ammonia is provided by the PdxT subunit. Can also use ribulose 5-phosphate and dihydroxyacetone phosphate as substrates, resulting from enzyme-catalyzed isomerization of RBP and G3P, respectively. This chain is Pyridoxal 5'-phosphate synthase subunit PdxS, found in Roseiflexus castenholzii (strain DSM 13941 / HLO8).